Reading from the N-terminus, the 387-residue chain is Succinate--CoA ligase [ADP-forming] subunit beta (387 aa).

Residues 9-236 enclose the ATP-grasp domain; it reads KELFAKHNVP…RAATDPLELK (228 aa). Residues K45, 52-54, S94, and E99 contribute to the ATP site; that span reads GRG. 2 residues coordinate Mg(2+): N191 and D205. Substrate contacts are provided by residues N256 and 318 to 320; that span reads GIT.

It belongs to the succinate/malate CoA ligase beta subunit family. In terms of assembly, heterotetramer of two alpha and two beta subunits. Mg(2+) serves as cofactor.

The enzyme catalyses succinate + ATP + CoA = succinyl-CoA + ADP + phosphate. It catalyses the reaction GTP + succinate + CoA = succinyl-CoA + GDP + phosphate. The protein operates within carbohydrate metabolism; tricarboxylic acid cycle; succinate from succinyl-CoA (ligase route): step 1/1. In terms of biological role, succinyl-CoA synthetase functions in the citric acid cycle (TCA), coupling the hydrolysis of succinyl-CoA to the synthesis of either ATP or GTP and thus represents the only step of substrate-level phosphorylation in the TCA. The beta subunit provides nucleotide specificity of the enzyme and binds the substrate succinate, while the binding sites for coenzyme A and phosphate are found in the alpha subunit. This chain is Succinate--CoA ligase [ADP-forming] subunit beta, found in Mycobacterium bovis (strain ATCC BAA-935 / AF2122/97).